The following is an 84-amino-acid chain: RNA-binding protein Hfq (84 aa).

One can recognise a Sm domain in the interval 11 to 71; that stretch reads DTFLNHVRKN…ISTIMPGHPV (61 aa).

Belongs to the Hfq family. Homohexamer.

Functionally, RNA chaperone that binds small regulatory RNA (sRNAs) and mRNAs to facilitate mRNA translational regulation in response to envelope stress, environmental stress and changes in metabolite concentrations. Also binds with high specificity to tRNAs. This chain is RNA-binding protein Hfq, found in Methylorubrum populi (strain ATCC BAA-705 / NCIMB 13946 / BJ001) (Methylobacterium populi).